Here is a 177-residue protein sequence, read N- to C-terminus: MSIVKSKIRTIPDYPKPGILFRDITSLLIDPEGFQLTIGMFVERYQNAKLNKIAAIDARGFIPGAALAFQLGVGFVPIRKKGKLPGNTISESYALEYGVDHVEIHTDAIVPGDKVLIMDDLIATGGTLEASIKLIQNLKGQIHECSTIINLPDLGGAKRIKDTYGIDVFSICEFEGH.

This sequence belongs to the purine/pyrimidine phosphoribosyltransferase family. In terms of assembly, homodimer.

The protein localises to the cytoplasm. The catalysed reaction is AMP + diphosphate = 5-phospho-alpha-D-ribose 1-diphosphate + adenine. It participates in purine metabolism; AMP biosynthesis via salvage pathway; AMP from adenine: step 1/1. Catalyzes a salvage reaction resulting in the formation of AMP, that is energically less costly than de novo synthesis. This is Adenine phosphoribosyltransferase from Leptospira biflexa serovar Patoc (strain Patoc 1 / Ames).